The following is a 149-amino-acid chain: Arginine repressor (149 aa).

This sequence belongs to the ArgR family.

The protein localises to the cytoplasm. The protein operates within amino-acid biosynthesis; L-arginine biosynthesis [regulation]. In terms of biological role, regulates arginine biosynthesis genes. In Geobacillus kaustophilus (strain HTA426), this protein is Arginine repressor.